Consider the following 179-residue polypeptide: Large ribosomal subunit protein uL6 (179 aa).

The protein belongs to the universal ribosomal protein uL6 family. In terms of assembly, part of the 50S ribosomal subunit.

This protein binds to the 23S rRNA, and is important in its secondary structure. It is located near the subunit interface in the base of the L7/L12 stalk, and near the tRNA binding site of the peptidyltransferase center. The protein is Large ribosomal subunit protein uL6 of Chlorobium phaeobacteroides (strain DSM 266 / SMG 266 / 2430).